The primary structure comprises 110 residues: Chorion class B protein M2410 (110 aa).

4 consecutive repeat copies span residues 1–4, 5–9, 10–14, and 15–19. The 4 X 5 AA tandem repeats of G-Y-G-G-L stretch occupies residues 1–19; the sequence is YGGLGYGGLGYGGLGYGGL. A left arm region spans residues 1–27; sequence YGGLGYGGLGYGGLGYGGLGGGCGRGF. Positions 28–96 are central domain; it reads SGGGLPVATA…GNGDVGITRE (69 aa). The right arm (Gly-rich tandem repeats) stretch occupies residues 97 to 110; the sequence is GGLGYGAGYGGGYG.

The protein belongs to the chorion protein family.

This protein is one of many from the eggshell of the silk moth. The protein is Chorion class B protein M2410 of Bombyx mori (Silk moth).